The chain runs to 266 residues: Glucosamine-6-phosphate deaminase (266 aa).

The Proton acceptor; for enolization step role is filled by D72. D141 functions as the For ring-opening step in the catalytic mechanism. H143 serves as the catalytic Proton acceptor; for ring-opening step. Residue E148 is the For ring-opening step of the active site.

It belongs to the glucosamine/galactosamine-6-phosphate isomerase family. NagB subfamily. In terms of assembly, homohexamer.

It catalyses the reaction alpha-D-glucosamine 6-phosphate + H2O = beta-D-fructose 6-phosphate + NH4(+). The protein operates within amino-sugar metabolism; N-acetylneuraminate degradation; D-fructose 6-phosphate from N-acetylneuraminate: step 5/5. Its activity is regulated as follows. Allosterically activated by N-acetylglucosamine 6-phosphate (GlcNAc6P). Its function is as follows. Catalyzes the reversible isomerization-deamination of glucosamine 6-phosphate (GlcN6P) to form fructose 6-phosphate (Fru6P) and ammonium ion. This Erwinia tasmaniensis (strain DSM 17950 / CFBP 7177 / CIP 109463 / NCPPB 4357 / Et1/99) protein is Glucosamine-6-phosphate deaminase.